The following is a 77-amino-acid chain: U18-lycotoxin-Ls1a (77 aa).

Positions 1-22 (MSPKMQALLLLLGLITLLVVHA) are cleaved as a signal peptide. The propeptide occupies 23–34 (EEELSENTESER). 4 disulfides stabilise this stretch: cysteine 36/cysteine 51, cysteine 43/cysteine 56, cysteine 50/cysteine 67, and cysteine 58/cysteine 65.

Belongs to the neurotoxin 02 (plectoxin) family. In terms of tissue distribution, expressed by the venom gland.

It is found in the secreted. The sequence is that of U18-lycotoxin-Ls1a from Lycosa singoriensis (Wolf spider).